A 224-amino-acid chain; its full sequence is Holliday junction branch migration complex subunit RuvA (224 aa).

A domain I region spans residues 1-67 (MISWLKGEKV…EDGTSLYGFI (67 aa)). The domain II stretch occupies residues 68-146 (EVNQRDLFRE…RFTDNDKTIH (79 aa)). The tract at residues 147–157 (ENKNDIEANQF) is flexible linker. Positions 157 to 224 (FSKYIDEIYL…ILMKLSEKST (68 aa)) are domain III.

It belongs to the RuvA family. In terms of assembly, homotetramer. Forms an RuvA(8)-RuvB(12)-Holliday junction (HJ) complex. HJ DNA is sandwiched between 2 RuvA tetramers; dsDNA enters through RuvA and exits via RuvB. An RuvB hexamer assembles on each DNA strand where it exits the tetramer. Each RuvB hexamer is contacted by two RuvA subunits (via domain III) on 2 adjacent RuvB subunits; this complex drives branch migration. In the full resolvosome a probable DNA-RuvA(4)-RuvB(12)-RuvC(2) complex forms which resolves the HJ.

The protein resides in the cytoplasm. Its function is as follows. The RuvA-RuvB-RuvC complex processes Holliday junction (HJ) DNA during genetic recombination and DNA repair, while the RuvA-RuvB complex plays an important role in the rescue of blocked DNA replication forks via replication fork reversal (RFR). RuvA specifically binds to HJ cruciform DNA, conferring on it an open structure. The RuvB hexamer acts as an ATP-dependent pump, pulling dsDNA into and through the RuvAB complex. HJ branch migration allows RuvC to scan DNA until it finds its consensus sequence, where it cleaves and resolves the cruciform DNA. This is Holliday junction branch migration complex subunit RuvA from Prochlorococcus marinus (strain NATL2A).